The sequence spans 379 residues: Serine/threonine-protein kinase spe-6 (379 aa).

The region spanning 26–302 (WKVLRNIYSG…SQAATEHQVT (277 aa)) is the Protein kinase domain. Residues 32 to 40 (IYSGPFSDV) and Lys-55 each bind ATP. Asp-147 (proton acceptor) is an active-site residue. Residues 331 to 379 (ASAKLDAKDNANESMDIEFDDMPPKEGISKSLSAEKSCTKNVETARTEK) form a disordered region. Positions 360 to 372 (KSLSAEKSCTKNV) are enriched in polar residues.

The protein belongs to the protein kinase superfamily. CK1 Ser/Thr protein kinase family.

It carries out the reaction L-seryl-[protein] + ATP = O-phospho-L-seryl-[protein] + ADP + H(+). It catalyses the reaction L-threonyl-[protein] + ATP = O-phospho-L-threonyl-[protein] + ADP + H(+). Functionally, serine/threonine-protein kinase which is involved in spermatogenesis. In spermatocytes, regulates meiosis and the localization and assembly of major sperm protein (MSP) into fibrous bodies. In addition, may suppress the initiation of spermiogenesis downstream of spe-8, spe-12, spe-27 and spe-29. This Caenorhabditis elegans protein is Serine/threonine-protein kinase spe-6.